Here is a 357-residue protein sequence, read N- to C-terminus: tRNA-specific 2-thiouridylase MnmA (357 aa).

Residues 11–18 (AMSGGVDS) and leucine 37 contribute to the ATP site. Cysteine 102 acts as the Nucleophile in catalysis. Residues cysteine 102 and cysteine 197 are joined by a disulfide bond. Glycine 126 lines the ATP pocket. Residues 148-150 (KDQ) are interaction with tRNA. Catalysis depends on cysteine 197, which acts as the Cysteine persulfide intermediate. The interval 301-302 (RY) is interaction with tRNA.

Belongs to the MnmA/TRMU family.

It localises to the cytoplasm. The enzyme catalyses S-sulfanyl-L-cysteinyl-[protein] + uridine(34) in tRNA + AH2 + ATP = 2-thiouridine(34) in tRNA + L-cysteinyl-[protein] + A + AMP + diphosphate + H(+). Functionally, catalyzes the 2-thiolation of uridine at the wobble position (U34) of tRNA, leading to the formation of s(2)U34. The polypeptide is tRNA-specific 2-thiouridylase MnmA (Dehalococcoides mccartyi (strain ATCC BAA-2266 / KCTC 15142 / 195) (Dehalococcoides ethenogenes (strain 195))).